The sequence spans 167 residues: MALSWQSLIDRITNLAKNQRQKKRGTEFLADTVALILFFTTTGIINERMIAGMSWDQVLHARLIGAALMIPVARPYGIWRDWLMQRANPSRGSQLLWDSMALVSFQVPIYAAIIAFSGATGGGLVRGTLGAALMMLFLGRPYGAFLNWVRKLFGLPPGGDKPMSLDS.

Helical transmembrane passes span 25–45, 50–70, 105–125, and 129–149; these read GTEF…TGII, IAGM…ALMI, FQVP…GGLV, and LGAA…LNWV.

This sequence belongs to the AlaE exporter family.

The protein resides in the cell inner membrane. Functionally, exports L-alanine. The chain is L-alanine exporter AlaE from Pantoea sp. (strain At-9b).